The sequence spans 426 residues: UDP-N-acetylglucosamine 1-carboxyvinyltransferase 2 (426 aa).

22 to 23 (KN) lines the phosphoenolpyruvate pocket. Arg92 contributes to the UDP-N-acetyl-alpha-D-glucosamine binding site. Asp116 functions as the Proton donor in the catalytic mechanism. Residues 121-125 (RPIDQ), Asp307, and Ile329 each bind UDP-N-acetyl-alpha-D-glucosamine.

This sequence belongs to the EPSP synthase family. MurA subfamily.

It is found in the cytoplasm. The catalysed reaction is phosphoenolpyruvate + UDP-N-acetyl-alpha-D-glucosamine = UDP-N-acetyl-3-O-(1-carboxyvinyl)-alpha-D-glucosamine + phosphate. It functions in the pathway cell wall biogenesis; peptidoglycan biosynthesis. Functionally, cell wall formation. Adds enolpyruvyl to UDP-N-acetylglucosamine. This Lactiplantibacillus plantarum (strain ATCC BAA-793 / NCIMB 8826 / WCFS1) (Lactobacillus plantarum) protein is UDP-N-acetylglucosamine 1-carboxyvinyltransferase 2.